The sequence spans 303 residues: Thyrotroph embryonic factor (303 aa).

Disordered regions lie at residues 1–63 and 132–176; these read MSDA…KLEE and ESAS…DPNC. Position 32 is a phosphoserine (Ser-32). Over residues 41–61 the composition is skewed to basic and acidic residues; that stretch reads KLMENPPREARLDKEKGKEKL. A compositionally biased stretch (low complexity) spans 133–160; the sequence is SASSSTASPPSSSTAIFQPSETVSSTES. The bZIP domain maps to 233–296; sequence DEKYWTRRKK…GKCKTIVSKY (64 aa). The interval 235-255 is basic motif; it reads KYWTRRKKNNVAAKRSRDARR. A leucine-zipper region spans residues 256 to 263; it reads LKENQITI.

This sequence belongs to the bZIP family. PAR subfamily. As to quaternary structure, binds DNA as a homodimer or a heterodimer. Can form a heterodimer with DBP.

It is found in the nucleus. Functionally, transcription factor that binds to and transactivates the TSHB promoter. Binds to a minimal DNA-binding sequence 5'-[TC][AG][AG]TTA[TC][AG]-3'. The sequence is that of Thyrotroph embryonic factor (TEF) from Homo sapiens (Human).